Here is a 316-residue protein sequence, read N- to C-terminus: Ribosomal RNA small subunit methyltransferase H (316 aa).

S-adenosyl-L-methionine-binding positions include 35–37 (AGH), D55, F84, D105, and Q112.

It belongs to the methyltransferase superfamily. RsmH family.

The protein localises to the cytoplasm. The catalysed reaction is cytidine(1402) in 16S rRNA + S-adenosyl-L-methionine = N(4)-methylcytidine(1402) in 16S rRNA + S-adenosyl-L-homocysteine + H(+). In terms of biological role, specifically methylates the N4 position of cytidine in position 1402 (C1402) of 16S rRNA. The protein is Ribosomal RNA small subunit methyltransferase H of Streptococcus pneumoniae (strain 70585).